Consider the following 91-residue polypeptide: Lipolysis-activating peptide 1-alpha chain (91 aa).

Positions 1–22 (MMKLVLFGIIVILFSLIGSIHG) are cleaved as a signal peptide. In terms of domain architecture, LCN-type CS-alpha/beta spans 24-87 (SGNYPLNPYG…VWNAVKKHCK (64 aa)). Cystine bridges form between C38–C61, C47–C66, and C51–C68.

It belongs to the long (3 C-C) scorpion toxin superfamily. In terms of assembly, monomer (edited version) and heterodimer (non-edited version) of this alpha chain and a beta chain (AC P84809). In terms of tissue distribution, expressed by the venom gland.

The protein resides in the secreted. Functionally, the heterodimer non-edited LVP1 induces lipolysis in rat adipocytes. Induction of lipolysis by LVP1 appears to be mediated through the beta-2 adrenergic receptor pathway (ADRB2). Intracerebroventricular injection is not toxic to mice. In terms of biological role, the edited BmKBTx-like, similar to beta-toxins, may modulate voltage-gated sodium channels (Nav) and may block voltage-gated potassium channels (Kv). This Buthus occitanus tunetanus (Common European scorpion) protein is Lipolysis-activating peptide 1-alpha chain.